A 568-amino-acid polypeptide reads, in one-letter code: Arginine--tRNA ligase (568 aa).

The 'HIGH' region signature appears at 129–139 (ANPTGPLHIGH).

The protein belongs to the class-I aminoacyl-tRNA synthetase family. As to quaternary structure, monomer.

Its subcellular location is the cytoplasm. It catalyses the reaction tRNA(Arg) + L-arginine + ATP = L-arginyl-tRNA(Arg) + AMP + diphosphate. This is Arginine--tRNA ligase from Wolbachia pipientis wMel.